Reading from the N-terminus, the 328-residue chain is Phenylalanine--tRNA ligase alpha subunit (328 aa).

Residue Glu-245 participates in Mg(2+) binding.

The protein belongs to the class-II aminoacyl-tRNA synthetase family. Phe-tRNA synthetase alpha subunit type 1 subfamily. In terms of assembly, tetramer of two alpha and two beta subunits. Requires Mg(2+) as cofactor.

It localises to the cytoplasm. It carries out the reaction tRNA(Phe) + L-phenylalanine + ATP = L-phenylalanyl-tRNA(Phe) + AMP + diphosphate + H(+). This Helicobacter pylori (strain G27) protein is Phenylalanine--tRNA ligase alpha subunit.